The chain runs to 262 residues: Type II pantothenate kinase (262 aa).

Residue 7-14 (DAGGSLVK) participates in ATP binding. Residue Glu-71 is the Proton acceptor of the active site. Residues Thr-101, 119–123 (GGLLT), and Tyr-135 each bind ATP.

The protein belongs to the type II pantothenate kinase family. As to quaternary structure, homodimer.

Its subcellular location is the cytoplasm. The catalysed reaction is (R)-pantothenate + ATP = (R)-4'-phosphopantothenate + ADP + H(+). Its pathway is cofactor biosynthesis; coenzyme A biosynthesis; CoA from (R)-pantothenate: step 1/5. In terms of biological role, catalyzes the phosphorylation of pantothenate (Pan), the first step in CoA biosynthesis. The polypeptide is Type II pantothenate kinase (Oceanobacillus iheyensis (strain DSM 14371 / CIP 107618 / JCM 11309 / KCTC 3954 / HTE831)).